We begin with the raw amino-acid sequence, 339 residues long: Uroporphyrinogen decarboxylase (339 aa).

Substrate is bound by residues 21 to 25 (RQAGR), Asp-71, Tyr-147, Ser-202, and His-315.

This sequence belongs to the uroporphyrinogen decarboxylase family. In terms of assembly, homodimer.

Its subcellular location is the cytoplasm. It catalyses the reaction uroporphyrinogen III + 4 H(+) = coproporphyrinogen III + 4 CO2. The protein operates within porphyrin-containing compound metabolism; protoporphyrin-IX biosynthesis; coproporphyrinogen-III from 5-aminolevulinate: step 4/4. In terms of biological role, catalyzes the decarboxylation of four acetate groups of uroporphyrinogen-III to yield coproporphyrinogen-III. In Helicobacter acinonychis (strain Sheeba), this protein is Uroporphyrinogen decarboxylase.